The chain runs to 246 residues: Probable transcriptional regulatory protein SPO1072 (246 aa).

The interval methionine 1 to serine 22 is disordered.

It belongs to the TACO1 family.

The protein localises to the cytoplasm. The protein is Probable transcriptional regulatory protein SPO1072 of Ruegeria pomeroyi (strain ATCC 700808 / DSM 15171 / DSS-3) (Silicibacter pomeroyi).